Here is a 328-residue protein sequence, read N- to C-terminus: DNA repair and recombination protein RadA (328 aa).

118–125 (GEYGSGKT) is an ATP binding site.

It belongs to the eukaryotic RecA-like protein family.

In terms of biological role, involved in DNA repair and in homologous recombination. Binds and assemble on single-stranded DNA to form a nucleoprotein filament. Hydrolyzes ATP in a ssDNA-dependent manner and promotes DNA strand exchange between homologous DNA molecules. The protein is DNA repair and recombination protein RadA of Desulfurococcus amylolyticus (strain DSM 18924 / JCM 16383 / VKM B-2413 / 1221n) (Desulfurococcus kamchatkensis).